The following is a 489-amino-acid chain: CDK5RAP3 protein homolog (489 aa).

Belongs to the CDK5RAP3 family.

Functionally, substrate adapter of E3 ligase complexes mediating ufmylation, the covalent attachment of the ubiquitin-like modifier UFM1 to substrate proteins, and which is involved in various processes, such as ribosome recycling and reticulophagy (also called ER-phagy). This Caenorhabditis elegans protein is CDK5RAP3 protein homolog.